The sequence spans 355 residues: MGGKTFMLMAGGTGGHIFPALAVADSLRVRGHHVIWLGSKDSMEERIVPQYGIRLETLAIKGIRGNGIKRKLMLPFTLYKTVREAQRIIRKHRVECVIGFGGFVTFPGGLAAKLLGVPIVIHEQNAVAGLSNRHLSRWAKRVLYAFPKAFSHEGGLVGNPVRADISNLPVPAERFQGREGRLKILVVGGSLGADVLNKTVPQALALLPEEVRPQMYHQSGRNKLGNLQADYDALGVKAECVEFITDMVSAYRDADLVICRAGALTIAELTAAGLGALLVPYPHAVDDHQTANARFMVQAEAGLLLPQTQLTAEKLAEILGSLNREKCLKWAENARTLALPHSADDVAEAAIACAA.

UDP-N-acetyl-alpha-D-glucosamine is bound by residues 13-15 (TGG), N125, R162, S190, I244, and Q289.

Belongs to the glycosyltransferase 28 family. MurG subfamily.

Its subcellular location is the cell inner membrane. The catalysed reaction is di-trans,octa-cis-undecaprenyl diphospho-N-acetyl-alpha-D-muramoyl-L-alanyl-D-glutamyl-meso-2,6-diaminopimeloyl-D-alanyl-D-alanine + UDP-N-acetyl-alpha-D-glucosamine = di-trans,octa-cis-undecaprenyl diphospho-[N-acetyl-alpha-D-glucosaminyl-(1-&gt;4)]-N-acetyl-alpha-D-muramoyl-L-alanyl-D-glutamyl-meso-2,6-diaminopimeloyl-D-alanyl-D-alanine + UDP + H(+). It participates in cell wall biogenesis; peptidoglycan biosynthesis. Cell wall formation. Catalyzes the transfer of a GlcNAc subunit on undecaprenyl-pyrophosphoryl-MurNAc-pentapeptide (lipid intermediate I) to form undecaprenyl-pyrophosphoryl-MurNAc-(pentapeptide)GlcNAc (lipid intermediate II). The chain is UDP-N-acetylglucosamine--N-acetylmuramyl-(pentapeptide) pyrophosphoryl-undecaprenol N-acetylglucosamine transferase from Neisseria gonorrhoeae (strain ATCC 700825 / FA 1090).